A 157-amino-acid chain; its full sequence is uncharacterized protein (157 aa).

Residues 9 to 154 (LLINYKTLDE…ETNLNAVTNE (146 aa)) enclose the N-acetyltransferase domain.

This is an uncharacterized protein from Bacillus cereus (strain G9842).